A 95-amino-acid chain; its full sequence is Small ribosomal subunit protein bS16 (95 aa).

It belongs to the bacterial ribosomal protein bS16 family.

The protein is Small ribosomal subunit protein bS16 of Thermotoga neapolitana (strain ATCC 49049 / DSM 4359 / NBRC 107923 / NS-E).